Consider the following 118-residue polypeptide: Large ribosomal subunit protein bL20 (118 aa).

The protein belongs to the bacterial ribosomal protein bL20 family.

Its function is as follows. Binds directly to 23S ribosomal RNA and is necessary for the in vitro assembly process of the 50S ribosomal subunit. It is not involved in the protein synthesizing functions of that subunit. The chain is Large ribosomal subunit protein bL20 from Cupriavidus metallidurans (strain ATCC 43123 / DSM 2839 / NBRC 102507 / CH34) (Ralstonia metallidurans).